A 383-amino-acid chain; its full sequence is 8-amino-7-oxononanoate synthase (383 aa).

Arg23 contributes to the substrate binding site. 110–111 (GF) contributes to the pyridoxal 5'-phosphate binding site. His135 provides a ligand contact to substrate. Positions 181, 209, and 235 each coordinate pyridoxal 5'-phosphate. Lys238 bears the N6-(pyridoxal phosphate)lysine mark. Thr351 lines the substrate pocket.

Belongs to the class-II pyridoxal-phosphate-dependent aminotransferase family. BioF subfamily. Homodimer. The cofactor is pyridoxal 5'-phosphate.

The catalysed reaction is 6-carboxyhexanoyl-[ACP] + L-alanine + H(+) = (8S)-8-amino-7-oxononanoate + holo-[ACP] + CO2. The protein operates within cofactor biosynthesis; biotin biosynthesis. Its function is as follows. Catalyzes the decarboxylative condensation of pimeloyl-[acyl-carrier protein] and L-alanine to produce 8-amino-7-oxononanoate (AON), [acyl-carrier protein], and carbon dioxide. This Aliivibrio fischeri (strain ATCC 700601 / ES114) (Vibrio fischeri) protein is 8-amino-7-oxononanoate synthase.